The primary structure comprises 419 residues: Acyl-[acyl-carrier-protein] desaturase 6, chloroplastic (419 aa).

The N-terminal 54 residues, 1-54 (MAATATMAMPLANRLRCKPNTNSSSPSRTLFGRRVTMISSSRWGSAVSGSAIMS), are a transit peptide targeting the chloroplast. 6 residues coordinate Fe cation: Glu-151, Glu-189, His-192, Glu-242, Glu-277, and His-280.

Belongs to the fatty acid desaturase type 2 family. As to quaternary structure, homodimer. The cofactor is Fe(2+).

The protein resides in the plastid. Its subcellular location is the chloroplast. It functions in the pathway lipid metabolism; fatty acid metabolism. Its function is as follows. Introduces a cis double bond in the acyl chain of an acyl-[acyl-carrier protein]. This is Acyl-[acyl-carrier-protein] desaturase 6, chloroplastic from Oryza sativa subsp. japonica (Rice).